A 92-amino-acid chain; its full sequence is Small ribosomal subunit protein uS19c (92 aa).

Belongs to the universal ribosomal protein uS19 family.

The protein resides in the plastid. Its subcellular location is the chloroplast. Functionally, protein S19 forms a complex with S13 that binds strongly to the 16S ribosomal RNA. This Adiantum capillus-veneris (Maidenhair fern) protein is Small ribosomal subunit protein uS19c.